The primary structure comprises 137 residues: Protein MesC (137 aa).

This Leuconostoc mesenteroides protein is Protein MesC (mesC).